Reading from the N-terminus, the 608-residue chain is MWLQQRLKVFPGLLSSSWARRVLAVSGFLVIIYWYIFSGSLFRSFWYAGPPRGISGACLHGQTMQWKALAEKGDVVMVSFPGEETKMQGPTMVGNGHIIVDVGKNNLWVSSLSVLFHLTNYSPLTFVKSVGALAETHATAIFFKEGLIRTIRCLQMEASDSSHDCVTVREDHFAHRSRPHVYVQKIHIANPSDRVVTFDISSQKPLTGETFTTSVEKVQERQFLLSSGRVSVEDGKIILVVVATKKLVSRLQVSPKSDYDETVFSVVYASEPIDPGKVSDTFSKLRESAKKEMFELMHMKTEDLFHEHQQIWSDLFVSGIEMKKIKDLHTPSRDTINITLYYMLSCSLAPLVDPILSNEERDKMESFLNYADHCFTGHSTMHAENLWPSSLSGITQLLQLWDLWKLTLQKRGCKSLVSAGAHGLMQGMLLSFGGLQFTENHLQFQSDPHVLHNSYSLRGVHYNKDLINLAVLLDKDEKPFLHVSVKFQDKLVKLYACEAGCLNEPVELTSEIRGHIFPVLVTQPLTPLLYISTDLTHLQDLRHTLHLKEILAHEEHMAKQYRGLPFLFWFSVASLITLFHLFLFKLIYNEYCGPGAKPLFRSKEDTSV.

The signal sequence occupies residues 1 to 38 (MWLQQRLKVFPGLLSSSWARRVLAVSGFLVIIYWYIFS). Residues 39–563 (GSLFRSFWYA…EEHMAKQYRG (525 aa)) are Extracellular-facing. A glycan (N-linked (GlcNAc...) asparagine) is linked at N337. The chain crosses the membrane as a helical span at residues 564–584 (LPFLFWFSVASLITLFHLFLF). At 585 to 608 (KLIYNEYCGPGAKPLFRSKEDTSV) the chain is on the cytoplasmic side.

The protein resides in the membrane. This is an uncharacterized protein from Xenopus tropicalis (Western clawed frog).